The chain runs to 453 residues: Chromosomal replication initiator protein DnaA (453 aa).

The segment at 1–71 (MSEKEIWEKV…QAILFDVVGY (71 aa)) is domain I, interacts with DnaA modulators. The segment at 71–114 (YEVKPHFITTEELANYSNNETATPKETTKPSTETTEDNHVLGRE) is domain II. The segment at 115-331 (QFNAHNTFDT…GALTRLLAYS (217 aa)) is domain III, AAA+ region. 4 residues coordinate ATP: glycine 159, glycine 161, lysine 162, and threonine 163. The interval 332–453 (QLLGKPITTE…ENLEKEIRNV (122 aa)) is domain IV, binds dsDNA.

Belongs to the DnaA family. As to quaternary structure, oligomerizes as a right-handed, spiral filament on DNA at oriC.

It localises to the cytoplasm. In terms of biological role, plays an essential role in the initiation and regulation of chromosomal replication. ATP-DnaA binds to the origin of replication (oriC) to initiate formation of the DNA replication initiation complex once per cell cycle. Binds the DnaA box (a 9 base pair repeat at the origin) and separates the double-stranded (ds)DNA. Forms a right-handed helical filament on oriC DNA; dsDNA binds to the exterior of the filament while single-stranded (ss)DNA is stabiized in the filament's interior. The ATP-DnaA-oriC complex binds and stabilizes one strand of the AT-rich DNA unwinding element (DUE), permitting loading of DNA polymerase. After initiation quickly degrades to an ADP-DnaA complex that is not apt for DNA replication. Binds acidic phospholipids. This Staphylococcus aureus (strain Mu3 / ATCC 700698) protein is Chromosomal replication initiator protein DnaA.